Reading from the N-terminus, the 100-residue chain is Urease subunit gamma (100 aa).

This sequence belongs to the urease gamma subunit family. Heterotrimer of UreA (gamma), UreB (beta) and UreC (alpha) subunits. Three heterotrimers associate to form the active enzyme.

It is found in the cytoplasm. It carries out the reaction urea + 2 H2O + H(+) = hydrogencarbonate + 2 NH4(+). Its pathway is nitrogen metabolism; urea degradation; CO(2) and NH(3) from urea (urease route): step 1/1. The chain is Urease subunit gamma from Rhizobium etli (strain ATCC 51251 / DSM 11541 / JCM 21823 / NBRC 15573 / CFN 42).